A 544-amino-acid polypeptide reads, in one-letter code: Chaperonin GroEL 3 (544 aa).

ATP contacts are provided by residues Thr30–Pro33, Lys51, Asp87–Thr91, Gly415, and Asp496.

This sequence belongs to the chaperonin (HSP60) family. In terms of assembly, forms a cylinder of 14 subunits composed of two heptameric rings stacked back-to-back. Interacts with the co-chaperonin GroES.

It is found in the cytoplasm. The enzyme catalyses ATP + H2O + a folded polypeptide = ADP + phosphate + an unfolded polypeptide.. Its function is as follows. Together with its co-chaperonin GroES, plays an essential role in assisting protein folding. The GroEL-GroES system forms a nano-cage that allows encapsulation of the non-native substrate proteins and provides a physical environment optimized to promote and accelerate protein folding. In Rhizobium etli (strain ATCC 51251 / DSM 11541 / JCM 21823 / NBRC 15573 / CFN 42), this protein is Chaperonin GroEL 3.